Here is a 430-residue protein sequence, read N- to C-terminus: Enolase (430 aa).

Position 164 (Gln-164) interacts with (2R)-2-phosphoglycerate. Glu-208 (proton donor) is an active-site residue. Residues Asp-245, Glu-288, and Asp-315 each contribute to the Mg(2+) site. 4 residues coordinate (2R)-2-phosphoglycerate: Lys-340, Arg-369, Ser-370, and Lys-391. The Proton acceptor role is filled by Lys-340.

This sequence belongs to the enolase family. Requires Mg(2+) as cofactor.

It is found in the cytoplasm. Its subcellular location is the secreted. The protein localises to the cell surface. The catalysed reaction is (2R)-2-phosphoglycerate = phosphoenolpyruvate + H2O. The protein operates within carbohydrate degradation; glycolysis; pyruvate from D-glyceraldehyde 3-phosphate: step 4/5. Its function is as follows. Catalyzes the reversible conversion of 2-phosphoglycerate (2-PG) into phosphoenolpyruvate (PEP). It is essential for the degradation of carbohydrates via glycolysis. The chain is Enolase from Thermococcus gammatolerans (strain DSM 15229 / JCM 11827 / EJ3).